We begin with the raw amino-acid sequence, 156 residues long: Large ribosomal subunit protein uL30 (156 aa).

It belongs to the universal ribosomal protein uL30 family. In terms of assembly, part of the 50S ribosomal subunit.

In Sulfolobus acidocaldarius (strain ATCC 33909 / DSM 639 / JCM 8929 / NBRC 15157 / NCIMB 11770), this protein is Large ribosomal subunit protein uL30.